The chain runs to 314 residues: Inosine-uridine preferring nucleoside hydrolase (314 aa).

Position 10 (aspartate 10) interacts with Ca(2+). Aspartate 14 serves as a coordination point for substrate. Ca(2+) is bound by residues aspartate 15 and threonine 126. Residues asparagine 160, glutamate 166, and asparagine 168 each contribute to the substrate site. Histidine 240 serves as the catalytic Proton donor. Position 241 (aspartate 241) interacts with Ca(2+).

This sequence belongs to the IUNH family. As to quaternary structure, homotetramer. Requires Ca(2+) as cofactor.

It catalyses the reaction inosine + H2O = hypoxanthine + D-ribose. It carries out the reaction uridine + H2O = D-ribose + uracil. The protein operates within purine metabolism; purine nucleoside salvage. Is potently inhibited by immucillin A and immucillin ACAP, which are transition state inhibitors. Its function is as follows. Catalyzes the hydrolysis of the N-glycosidic bond of all of the commonly occurring purine and pyrimidine nucleosides into ribose and the associated base, but has a preference for inosine and uridine as substrates. Likely functions in purine salvage from the host, a fundamental pathway since protozoan parasites such as L.major are incapable of de novo purine biosynthesis. The polypeptide is Inosine-uridine preferring nucleoside hydrolase (NSNH) (Leishmania major).